We begin with the raw amino-acid sequence, 298 residues long: ATP synthase F(1) complex subunit gamma, mitochondrial (298 aa).

A mitochondrion-targeting transit peptide spans 1 to 25; that stretch reads MFSRASVVGLSACAVQPQWIQVRNM. An N6-acetyllysine modification is found at Lys39. Lys49 carries the post-translational modification N6-succinyllysine. N6-acetyllysine is present on Lys55. Lys115 is modified (N6-acetyllysine; alternate). Lys115 carries the N6-succinyllysine; alternate modification. Lys138 is modified (N6-acetyllysine). Position 146 is a phosphoserine (Ser146). Lys154 carries the N6-acetyllysine; alternate modification. Lys154 bears the N6-succinyllysine; alternate mark. An N6-acetyllysine modification is found at Lys197. An N6-succinyllysine modification is found at Lys270.

This sequence belongs to the ATPase gamma chain family. Component of the ATP synthase complex composed at least of ATP5F1A/subunit alpha, ATP5F1B/subunit beta, ATP5MC1/subunit c (homooctomer), MT-ATP6/subunit a, MT-ATP8/subunit 8, ATP5ME/subunit e, ATP5MF/subunit f, ATP5MG/subunit g, ATP5MK/subunit k, ATP5MJ/subunit j, ATP5F1C/subunit gamma, ATP5F1D/subunit delta, ATP5F1E/subunit epsilon, ATP5PF/subunit F6, ATP5PB/subunit b, ATP5PD/subunit d, ATP5PO/subunit OSCP. ATP synthase complex consists of a soluble F(1) head domain (subunits alpha(3) and beta(3)) - the catalytic core - and a membrane F(0) domain - the membrane proton channel (subunits c, a, 8, e, f, g, k and j). These two domains are linked by a central stalk (subunits gamma, delta, and epsilon) rotating inside the F1 region and a stationary peripheral stalk (subunits F6, b, d, and OSCP). Interacts with FLVCR2; this interaction occurs in the absence of heme and is disrupted upon heme binding.

The protein resides in the mitochondrion inner membrane. In terms of biological role, subunit gamma, of the mitochondrial membrane ATP synthase complex (F(1)F(0) ATP synthase or Complex V) that produces ATP from ADP in the presence of a proton gradient across the membrane which is generated by electron transport complexes of the respiratory chain. ATP synthase complex consist of a soluble F(1) head domain - the catalytic core - and a membrane F(1) domain - the membrane proton channel. These two domains are linked by a central stalk rotating inside the F(1) region and a stationary peripheral stalk. During catalysis, ATP synthesis in the catalytic domain of F(1) is coupled via a rotary mechanism of the central stalk subunits to proton translocation. In vivo, can only synthesize ATP although its ATP hydrolase activity can be activated artificially in vitro. With the central stalk subunit delta, is essential for the biogenesis of F(1) catalytic part of the ATP synthase complex namely in the formation of F1 assembly intermediate. In Mus musculus (Mouse), this protein is ATP synthase F(1) complex subunit gamma, mitochondrial.